The following is a 497-amino-acid chain: UDP-N-acetylmuramoyl-L-alanyl-D-glutamate--2,6-diaminopimelate ligase (497 aa).

Serine 33 serves as a coordination point for UDP-N-acetyl-alpha-D-muramoyl-L-alanyl-D-glutamate. 119 to 125 serves as a coordination point for ATP; that stretch reads GTNGKTT. UDP-N-acetyl-alpha-D-muramoyl-L-alanyl-D-glutamate-binding positions include 161–162, serine 188, glutamine 194, and arginine 196; that span reads TT. An N6-carboxylysine modification is found at lysine 228. Residues arginine 390, 414 to 417, glycine 465, and glutamate 469 contribute to the meso-2,6-diaminopimelate site; that span reads DNPR. The Meso-diaminopimelate recognition motif signature appears at 414–417; it reads DNPR.

The protein belongs to the MurCDEF family. MurE subfamily. The cofactor is Mg(2+). In terms of processing, carboxylation is probably crucial for Mg(2+) binding and, consequently, for the gamma-phosphate positioning of ATP.

It is found in the cytoplasm. It carries out the reaction UDP-N-acetyl-alpha-D-muramoyl-L-alanyl-D-glutamate + meso-2,6-diaminopimelate + ATP = UDP-N-acetyl-alpha-D-muramoyl-L-alanyl-gamma-D-glutamyl-meso-2,6-diaminopimelate + ADP + phosphate + H(+). Its pathway is cell wall biogenesis; peptidoglycan biosynthesis. Functionally, catalyzes the addition of meso-diaminopimelic acid to the nucleotide precursor UDP-N-acetylmuramoyl-L-alanyl-D-glutamate (UMAG) in the biosynthesis of bacterial cell-wall peptidoglycan. In Synechococcus elongatus (strain ATCC 33912 / PCC 7942 / FACHB-805) (Anacystis nidulans R2), this protein is UDP-N-acetylmuramoyl-L-alanyl-D-glutamate--2,6-diaminopimelate ligase.